We begin with the raw amino-acid sequence, 517 residues long: Heat shock 70-related protein 5 (517 aa).

Belongs to the heat shock protein 70 family.

May function in protein folding and assembly, and disassembly of protein complexes. This Dictyostelium discoideum (Social amoeba) protein is Heat shock 70-related protein 5.